The sequence spans 257 residues: Glutamate racemase (257 aa).

Substrate contacts are provided by residues 12–13 (DS) and 44–45 (YG). Cys-75 acts as the Proton donor/acceptor in catalysis. Substrate is bound at residue 76-77 (NT). Cys-185 (proton donor/acceptor) is an active-site residue. 186–187 (TH) is a binding site for substrate.

Belongs to the aspartate/glutamate racemases family.

The enzyme catalyses L-glutamate = D-glutamate. It functions in the pathway cell wall biogenesis; peptidoglycan biosynthesis. Provides the (R)-glutamate required for cell wall biosynthesis. The chain is Glutamate racemase from Clostridium botulinum (strain Loch Maree / Type A3).